The chain runs to 853 residues: DNA mismatch repair protein MutS (853 aa).

614–621 (GPNMGGKS) lines the ATP pocket.

This sequence belongs to the DNA mismatch repair MutS family.

Functionally, this protein is involved in the repair of mismatches in DNA. It is possible that it carries out the mismatch recognition step. This protein has a weak ATPase activity. The sequence is that of DNA mismatch repair protein MutS from Shigella boydii serotype 18 (strain CDC 3083-94 / BS512).